The chain runs to 347 residues: Zinc finger protein CONSTANS-LIKE 2 (347 aa).

Cys-16, Cys-19, Cys-39, His-44, Cys-59, Cys-62, Cys-82, and His-87 together coordinate Zn(2+). Residues 16-58 (CDTCRSAACTVYCEADSAYLCTTCDARVHAANRVASRHERVRV) form a B box-type 1; atypical zinc finger. A B box-type 2; atypical zinc finger spans residues 59-101 (CQSCESAPAAFLCKADAASLCTACDAEIHSANPLARRHQRVPI). The region spanning 278 to 320 (REARVLRYREKKKTRKFDKTIRYASRKAYAEIRPRIKGRFAKR) is the CCT domain.

The protein belongs to the CONSTANS family. As to expression, highly expressed in leaves. Expressed at lower levels in stems, flowers and siliques. Not detected in roots.

It localises to the nucleus. Functionally, putative transcription factor. Does not affect flowering time. The sequence is that of Zinc finger protein CONSTANS-LIKE 2 (COL2) from Arabidopsis thaliana (Mouse-ear cress).